Here is a 1079-residue protein sequence, read N- to C-terminus: MSQENVSDKVRNIQKQIGHNIKFGQRPPSLRKSEGDEGSSDEEEVPQSPLRVLAQVENEPPETSAKEKSVSHDTVQHRTPVKSPRTKRPPPPGTIESINLDAVPQSVPRLDNTAAKHKLSVKPKNQRVSRKHRRFTQEFHEDDFSEIQEEFEKDEEVFDSSREDYGIIHGSKEDYEPTEKSQRQRFHEEEKEHLEIKKREQEEERKMEKHRRMIEEQRLEEEKRRRQEEERLQKVEEERKQREEEERKKREEEERRREEEERRLRHEEERKRQEEEERMKKEEEERKRAEEERRQQELLAERLRLEEERKREQEERRRKEEEEAEKRRIQELQEKRLREEEHRIREEERCRQEEAERKRLEEEERKRQLQEEKAGSTDPEWKRKAEELRWREMEERQRPFTFKVSSGEKQILFQKVNLTPVTPATGQQGETTAETWEGAKASSPGGPDSPTLSSSLYVPHTAILVTGAQLCGTAVNLDQIKDTACKSLLGLSEGKKAMGTPPSKSKTSPDRKSGKTKSVFESSLSTDQSNAAVLAEWASIRSKIFKGAEEGKYPEYTDQSRRPTSEDLNTVPFSHTNLRKTMSASAKFSITPARKKFADSNRNSEIFGQEEGVKTESAFTETSPVQKELPSLGTKVQSRGSKLVRIADEECMFAKDLPSFLVPSPPHGSPKSQRSESGSPIQAESEDSDTKDEDGEQKAQGGDEQPSPFGIKLRRTNYSLRFHNEQSAEKKKKRYSAGDSFEGVPVPLTAIDQDSDNSTLSEKSSPISPQQENIEFQTTVAPSKESRSKFSRSTLPLARTEGDNMSPKPPLYQKPATSPKPSEGATPLLSPLPKPGRRTSGDTISQRTGEAEQVATEQGSDHKGGVTASGPSQKSGQGEEDVKEKKSFFPSISIPWREKTDRRTELIKKEKPSLQARHSLDSSRSQDKETGPLWITLALQKQKGFREQQQNREERRNQREAKLAEKQARDRESAGSSPTEDKGNGSSSIISKHQTADENKRPDTLLARFERRDNLKKANTLPSSVTVEITDSTPSPPATKDVTKRFPPGDTTQVSTEPAWLALAKRKAKAWSDCPQIIK.

Residues M1–R11 are compositionally biased toward basic and acidic residues. Disordered regions lie at residues M1–R293, E308–R327, E341–R383, P420–S453, E493–S522, I606–R639, and P658–V1054. The span at D36–V45 shows a compositional bias: acidic residues. Positions S64–Q76 are enriched in basic and acidic residues. The segment covering A115 to R134 has biased composition (basic residues). Acidic residues predominate over residues H140 to F158. Positions D159–R293 are enriched in basic and acidic residues. Residues P420 to E434 show a composition bias toward polar residues. The segment covering P670–Q682 has biased composition (polar residues). Positions E684–G695 are enriched in acidic residues. The span at D756 to A781 shows a compositional bias: polar residues. Composition is skewed to basic and acidic residues over residues W896 to T930 and G944 to G983. Over residues N984–H993 the composition is skewed to polar residues. Positions Q994–K1016 are enriched in basic and acidic residues. Residues T1020–T1033 are compositionally biased toward polar residues.

In terms of assembly, directly interacts with actin-capping proteins; this interaction decreases the binding of capping proteins to actin.

The protein resides in the cytoplasm. Its subcellular location is the cytosol. Functionally, involved in epithelial cell integrity by acting on the maintenance of the actin cytoskeleton. Positively regulates the actin polymerization, by inhibiting the interaction of actin-capping proteins with actin. The sequence is that of Capping protein inhibiting regulator of actin dynamics (crad) from Danio rerio (Zebrafish).